A 713-amino-acid polypeptide reads, in one-letter code: Calpain-1 catalytic subunit (713 aa).

The 300-residue stretch at 55–354 (LFQDDAFPPV…FTKLEICNLT (300 aa)) folds into the Calpain catalytic domain. Residues C115, H272, and N296 contribute to the active site. T354 carries the post-translational modification Phosphothreonine. The tract at residues 355 to 525 (PDALKSRTLR…KKAGTQELDD (171 aa)) is domain III. Residues 526–541 (QIQANLPDEKVLSEEE) form a linker region. The segment at 542 to 712 (IDDNFKTLFS…LFKWLQLTMF (171 aa)) is domain IV. EF-hand domains are found at residues 557 to 575 (DMEI…IISK), 584 to 609 (FSLE…LVEF), 614 to 649 (NRIR…AGFK), and 679 to 713 (VRLE…TMFA). Ca(2+)-binding residues include D597, D599, N601, K603, E608, D627, D629, S631, S633, and E638.

It belongs to the peptidase C2 family. Forms a heterodimer with a small (regulatory) subunit CAPNS1. It depends on Ca(2+) as a cofactor. In terms of processing, undergoes calcium-induced successive autoproteolytic cleavages that generate a membrane-bound 78 kDa active form and an intracellular 75 kDa active form. Calpastatin reduces with high efficiency the transition from 78 kDa to 75 kDa calpain forms.

The protein resides in the cytoplasm. It is found in the cell membrane. It carries out the reaction Broad endopeptidase specificity.. With respect to regulation, activated by micromolar concentrations of calcium and inhibited by calpastatin. In terms of biological role, calcium-regulated non-lysosomal thiol-protease which catalyzes limited proteolysis of substrates involved in cytoskeletal remodeling and signal transduction. Proteolytically cleaves CTBP1 at 'Asn-364', 'Gly-377' and 'His-399'. Cleaves and activates caspase-7 (CASP7). The protein is Calpain-1 catalytic subunit of Rattus norvegicus (Rat).